The chain runs to 601 residues: uncharacterized protein (601 aa).

A disordered region spans residues 127-364; it reads SSLFSSGSPP…PAFANDDTVH (238 aa). The segment covering 128–137 has biased composition (polar residues); it reads SLFSSGSPPD. A compositionally biased stretch (low complexity) spans 141-154; sequence RNSTSNLSSVSTNS. Composition is skewed to polar residues over residues 159 to 177, 199 to 213, and 232 to 250; these read TIGS…ASQR, ALSS…NVTP, and SATN…SPSQ. Phosphoserine is present on residues serine 247 and serine 281. A compositionally biased stretch (low complexity) spans 265–281; that stretch reads SLSSSPSSEDSDLSLSS. Basic and acidic residues-rich tracts occupy residues 286–296 and 313–325; these read DEKKQPSKSEK and GSKE…KEKA. Serine 335 is modified (phosphoserine). Residues 338–356 show a composition bias toward polar residues; sequence DTSTEYDSNSLRRSRSNPA.

This is an uncharacterized protein from Schizosaccharomyces pombe (strain 972 / ATCC 24843) (Fission yeast).